We begin with the raw amino-acid sequence, 425 residues long: Serine--tRNA ligase (425 aa).

Residue 229–231 (TAE) coordinates L-serine. 260–262 (RSE) is an ATP binding site. L-serine is bound at residue Glu-283. Residue 347-350 (EISS) coordinates ATP. Residue Ser-384 coordinates L-serine.

The protein belongs to the class-II aminoacyl-tRNA synthetase family. Type-1 seryl-tRNA synthetase subfamily. As to quaternary structure, homodimer. The tRNA molecule binds across the dimer.

The protein localises to the cytoplasm. The catalysed reaction is tRNA(Ser) + L-serine + ATP = L-seryl-tRNA(Ser) + AMP + diphosphate + H(+). It catalyses the reaction tRNA(Sec) + L-serine + ATP = L-seryl-tRNA(Sec) + AMP + diphosphate + H(+). Its pathway is aminoacyl-tRNA biosynthesis; selenocysteinyl-tRNA(Sec) biosynthesis; L-seryl-tRNA(Sec) from L-serine and tRNA(Sec): step 1/1. Functionally, catalyzes the attachment of serine to tRNA(Ser). Is also able to aminoacylate tRNA(Sec) with serine, to form the misacylated tRNA L-seryl-tRNA(Sec), which will be further converted into selenocysteinyl-tRNA(Sec). This is Serine--tRNA ligase from Rhizorhabdus wittichii (strain DSM 6014 / CCUG 31198 / JCM 15750 / NBRC 105917 / EY 4224 / RW1) (Sphingomonas wittichii).